The following is a 253-amino-acid chain: Methionine aminopeptidase A (253 aa).

His-80 lines the substrate pocket. 3 residues coordinate a divalent metal cation: Asp-98, Asp-109, and His-172. His-179 contacts substrate. The a divalent metal cation site is built by Glu-205 and Glu-236.

Belongs to the peptidase M24A family. Methionine aminopeptidase type 1 subfamily. Monomer. Requires Co(2+) as cofactor. Zn(2+) serves as cofactor. It depends on Mn(2+) as a cofactor. Fe(2+) is required as a cofactor.

It carries out the reaction Release of N-terminal amino acids, preferentially methionine, from peptides and arylamides.. Its function is as follows. Removes the N-terminal methionine from nascent proteins. The N-terminal methionine is often cleaved when the second residue in the primary sequence is small and uncharged (Met-Ala-, Cys, Gly, Pro, Ser, Thr, or Val). Requires deformylation of the N(alpha)-formylated initiator methionine before it can be hydrolyzed. This Synechocystis sp. (strain ATCC 27184 / PCC 6803 / Kazusa) protein is Methionine aminopeptidase A.